A 267-amino-acid polypeptide reads, in one-letter code: Diphthine--ammonia ligase (267 aa).

Position 97 is a phosphotyrosine (Tyr97).

The protein belongs to the Diphthine--ammonia ligase family.

The enzyme catalyses diphthine-[translation elongation factor 2] + NH4(+) + ATP = diphthamide-[translation elongation factor 2] + AMP + diphosphate + H(+). It functions in the pathway protein modification; peptidyl-diphthamide biosynthesis. Functionally, amidase that catalyzes the last step of diphthamide biosynthesis using ammonium and ATP. Diphthamide biosynthesis consists in the conversion of an L-histidine residue in the translation elongation factor eEF-2 (EEF2) to diphthamide. The polypeptide is Diphthine--ammonia ligase (Dph6) (Rattus norvegicus (Rat)).